A 463-amino-acid chain; its full sequence is Annexin A7 (463 aa).

A compositionally biased stretch (pro residues) spans 1-18; that stretch reads MSYPGYPPTGYPPFPGYP. Disordered stretches follow at residues 1-34 and 77-149; these read MSYP…QYPY and SPGG…MTQG. The repeat-rich region stretch occupies residues 1-143; the sequence is MSYPGYPPTG…GGQAPYPSQP (143 aa). The 3 X 5 AA tandem repeats of G-Y-P-P-X stretch occupies residues 5 to 20; the sequence is GYPPTGYPPFPGYPPA. Residues 86-99 are compositionally biased toward gly residues; that stretch reads GGQGFGAPPGGAGF. 4 Annexin repeats span residues 160 to 231, 232 to 303, 315 to 387, and 391 to 462; these read FDAM…ALFM, PSTY…SMCQ, QMAQ…TILQ, and NRPA…AIVG. The residue at position 208 (Lys-208) is an N6-acetyllysine.

Belongs to the annexin family. As to quaternary structure, interacts with PDCD6.

Its function is as follows. Calcium/phospholipid-binding protein which promotes membrane fusion and is involved in exocytosis. The chain is Annexin A7 (Anxa7) from Mus musculus (Mouse).